Reading from the N-terminus, the 158-residue chain is MGRFISVSFGLLVVFLSLSGTGAGLDCPPDSSLYRYFCYRVFKEHKTWEAAERFCMEHPNNGHLVSIESMEEAEFVAKLLSNTTGKFITHFWIGLMIKDKEQECSSEWSDGSSVSYDKLGKQEFRKCFVLEKESGYRMWFNRNCEERYLFVCKVPPEC.

Residues 1 to 24 form the signal peptide; sequence MGRFISVSFGLLVVFLSLSGTGAG. 3 disulfides stabilise this stretch: cysteine 27–cysteine 38, cysteine 55–cysteine 152, and cysteine 127–cysteine 144. Residues 34–153 form the C-type lectin domain; sequence YRYFCYRVFK…CEERYLFVCK (120 aa). N-linked (GlcNAc...) (complex) asparagine glycosylation is present at asparagine 82.

Belongs to the snaclec family. In terms of assembly, heterotrimer; disulfide-linked. The heterotrimer consists of 1 heavy chain (a metalloproteinase) and 2 light chains: LC1 and LC2. In terms of processing, N-glycosylated; probably required for conformation. Removal of easily accessible sugars does not change its functional capacity, but removal of the core sugars with N-glycanase causes a virtually complete loss of enzyme activity, apparently as a result of major conformational changes in the molecule. Not O-glycosylated. In terms of tissue distribution, expressed by the venom gland.

The protein localises to the secreted. Its function is as follows. Regulatory subunit of the blood coagulation factor X- and IX-activating enzyme. The enzyme activates coagulation factor X (F10) by cleaving the Arg-Ile bond and is also able to activate coagulation factor IX (F9) and protein S (PROS1) by specific cleavage of Arg-Ile and Arg-Val bonds. May serve as an exosite by which the enzyme recognizes and binds to the Gla domain of factor X (F10) and factor IX (F9) in a calcium-dependent manner. The chain is Snaclec coagulation factor X-activating enzyme light chain 2 (LC2) from Daboia siamensis (Eastern Russel's viper).